Consider the following 340-residue polypeptide: UDP-3-O-(3-hydroxymyristoyl)glucosamine N-acyltransferase (340 aa).

The active-site Proton acceptor is His239.

Belongs to the transferase hexapeptide repeat family. LpxD subfamily. Homotrimer.

It carries out the reaction a UDP-3-O-[(3R)-3-hydroxyacyl]-alpha-D-glucosamine + a (3R)-hydroxyacyl-[ACP] = a UDP-2-N,3-O-bis[(3R)-3-hydroxyacyl]-alpha-D-glucosamine + holo-[ACP] + H(+). The enzyme catalyses UDP-3-O-[(3R)-3-hydroxytetradecanoyl]-alpha-D-glucosamine + (3R)-hydroxytetradecanoyl-[ACP] = UDP-2-N,3-O-bis[(3R)-3-hydroxytetradecanoyl]-alpha-D-glucosamine + holo-[ACP] + H(+). It participates in glycolipid biosynthesis; lipid IV(A) biosynthesis; lipid IV(A) from (3R)-3-hydroxytetradecanoyl-[acyl-carrier-protein] and UDP-N-acetyl-alpha-D-glucosamine: step 3/6. Functionally, catalyzes the N-acylation of UDP-3-O-(hydroxytetradecanoyl)glucosamine using 3-hydroxytetradecanoyl-ACP as the acyl donor. Is involved in the biosynthesis of lipid A, a phosphorylated glycolipid that anchors the lipopolysaccharide to the outer membrane of the cell. This is UDP-3-O-(3-hydroxymyristoyl)glucosamine N-acyltransferase from Wigglesworthia glossinidia brevipalpis.